The following is a 690-amino-acid chain: Elongation factor G (690 aa).

Positions 8–283 (SRCRNIGIMA…AVVDFLPSPS (276 aa)) constitute a tr-type G domain. GTP is bound by residues 17 to 24 (AHIDAGKT), 81 to 85 (DTPGH), and 135 to 138 (NKMD).

It belongs to the TRAFAC class translation factor GTPase superfamily. Classic translation factor GTPase family. EF-G/EF-2 subfamily.

The protein resides in the cytoplasm. Its function is as follows. Catalyzes the GTP-dependent ribosomal translocation step during translation elongation. During this step, the ribosome changes from the pre-translocational (PRE) to the post-translocational (POST) state as the newly formed A-site-bound peptidyl-tRNA and P-site-bound deacylated tRNA move to the P and E sites, respectively. Catalyzes the coordinated movement of the two tRNA molecules, the mRNA and conformational changes in the ribosome. The chain is Elongation factor G from Anaplasma marginale (strain St. Maries).